The sequence spans 1453 residues: MIESENLNQEEIIKELCLCNGLSYEMVGQEGSDTSKLEMFFLGYPRIVGLSLFPNLTSLTIVAQDIKEISGLEPCLQLKELWIAECCIEKIEGLQECRNLEKLYLYFNKISKIENLEKLIKLKVLWLNHNTIKNIEGLQTLKNLKDLNLAGNLINSIGRCLDSNEQLERLNLSGNQICSFKELTNLTRLPCLKDLCLNDPQYTTNPVCLLCNYSTHVLYHLPCLQRFDTLDVSAKQIKELADTTAMKKIMYYNMRIKTLQRHLKEDLEKLNDQKCKLQKLPEERVKLFSFVKKTLERELAELKGSGKGHSDGSNNSKVTDPETLKSCETVTEEPSLQQKILAKLNALNERVTFWNKKLDEIEAIYHIEVKQKKKSHGLLIPLLLIELETVGNFHFEEGTRSDDWFNFCYELILSRFCAWDFRTYGITGVKVKRIIKVNNRILRLKFEEKFQKFLENEDMHDSESYRRMLECLFYVFDPEVSVKKKHLLQILEKGFKDSETSKLPLKKEAIIVSNSLSISECPRIEFLQQKHKDEKKISLKHELFRHGILLITKVFLGQSVQAHEKESISQSNYPMVNSVFIPRKYLLNSVMGQRNCDCSVRQCKWFVFDHDLVLPEYVVEFEYITMVKAPSLFSVFNNVILEESKKNPEVSVFSKDLKFDDEVIKMEPRIKARPKLISLDDKTILSLAKTSVYSHIVSLNLHGNSLSKLRDLSKLTGLRKLNISFNEFTCLDDVYHLYNLEYLDASHNHVITLEGFRGLMKLKHLDLSWNQLKKSGNEINMLCKHTTSLLTLDIQHNPWQKPATLRLSVIGRLKTLTHLNGVFISEEEATAAMKFIAGTRITQLSLLRHSSTKEERPRILSIWPSAKILTQVSKLGPHLHLSGNCYLKITALNLDGQHLFEITNLEKLENLKWASFSNNNLTKMEGLESCINLEELTLDGNCISKIEGISKMTKLTRLSINNNLLTGWEEHTFDNMLHLHSLSLENNRITSLSGLQKSFTLVELYISNNYIAVNQEMHNLKGLCNLVILDMCGNIIIWNQENYRLFVIFHLPELKALDGIPIEPSETDSAKDLFGGRLTSDMIAERQGHSNFKQMQELNWTSSSIRTVDLIPVDQFRNVCNVNLQNNHLTSFSGLIYLPNVKVLCLNYNHIESIMPRLKPQTHLTSRQLLYQKVPSSGYGQQGISKTNRDIMSSENLPPIMHSLEVLHLGYNGICNLIQLQLNRLRNLKFLFLQGNEISQVEGLDNLVVLQELVVDHNRIRSFNDSAFAKPSSLLALHLEENRLRELGKLQSLVKLEKLFLGYNKIQDITELEKLDVISTLRELTVYGNPICRKMLHRHMLIFRLPNLQMLDGSPVNSDDRAKAEFHLAELQAKKNSLIPVTHSPMDGRSFGQVKTPPIEITNVLLPSGFSHYLGSDVTLTPEVEEFLGATFQDQIECNCLKRNEHTPRNSPV.

LRR repeat units follow at residues 53–78 (FPNL…CLQL), 97–119 (CRNL…LEKL), 120–141 (IKLK…LQTL), 142–164 (KNLK…LDSN), 166–188 (QLER…NLTR), 224–248 (LQRF…AMKK), and 264–287 (KEDL…RVKL). Positions 302–321 (LKGSGKGHSDGSNNSKVTDP) are disordered. LRR repeat units follow at residues 344–367 (LNAL…IYHI), 671–693 (KARP…TSVY), 694–715 (SHIV…LSKL), 716–737 (TGLR…VYHL), 739–758 (NLEY…GFRG), 759–784 (LMKL…MLCK), 786–812 (TTSL…VIGR), 886–908 (YLKI…LEKL), 909–930 (ENLK…LESC), 931–952 (INLE…ISKM), 953–975 (TKLT…TFDN), 976–1001 (MLHL…SFTL), 1023–1048 (LCNL…LFVI), 1092–1115 (FKQM…PVDQ), 1116–1138 (FRNV…LIYL), 1139–1161 (PNVK…LKPQ), 1201–1224 (MHSL…QLNR), 1225–1247 (LRNL…LDNL), 1248–1270 (VVLQ…AFAK), 1272–1292 (SSLL…KLQS), 1293–1317 (LVKL…KLDV), 1319–1345 (STLR…IFRL), and 1365–1388 (EFHL…PMDG).

The sequence is that of Leucine-rich repeat-containing protein 9 (LRRC9) from Homo sapiens (Human).